Here is a 307-residue protein sequence, read N- to C-terminus: Universal stress protein A family protein C25B2.10 (307 aa).

The tract at residues 1-63 is disordered; that stretch reads MSESAPAGSK…RSSMEQPTFR (63 aa). The segment covering 21–30 has biased composition (basic and acidic residues); sequence PEPRTSKDQQ. The residue at position 44 (Ser44) is a Phosphoserine. Thr48 carries the phosphothreonine modification. Ser98 and Ser102 each carry phosphoserine.

Belongs to the universal stress protein A family.

It is found in the barrier septum. Its subcellular location is the cell tip. The polypeptide is Universal stress protein A family protein C25B2.10 (Schizosaccharomyces pombe (strain 972 / ATCC 24843) (Fission yeast)).